The sequence spans 286 residues: Phosphatidylserine decarboxylase proenzyme (286 aa).

Residues Asp-88, His-145, and Ser-251 each act as charge relay system; for autoendoproteolytic cleavage activity in the active site. The active-site Schiff-base intermediate with substrate; via pyruvic acid; for decarboxylase activity is Ser-251. At Ser-251 the chain carries Pyruvic acid (Ser); by autocatalysis.

Belongs to the phosphatidylserine decarboxylase family. PSD-B subfamily. Prokaryotic type I sub-subfamily. In terms of assembly, heterodimer of a large membrane-associated beta subunit and a small pyruvoyl-containing alpha subunit. The cofactor is pyruvate. In terms of processing, is synthesized initially as an inactive proenzyme. Formation of the active enzyme involves a self-maturation process in which the active site pyruvoyl group is generated from an internal serine residue via an autocatalytic post-translational modification. Two non-identical subunits are generated from the proenzyme in this reaction, and the pyruvate is formed at the N-terminus of the alpha chain, which is derived from the carboxyl end of the proenzyme. The autoendoproteolytic cleavage occurs by a canonical serine protease mechanism, in which the side chain hydroxyl group of the serine supplies its oxygen atom to form the C-terminus of the beta chain, while the remainder of the serine residue undergoes an oxidative deamination to produce ammonia and the pyruvoyl prosthetic group on the alpha chain. During this reaction, the Ser that is part of the protease active site of the proenzyme becomes the pyruvoyl prosthetic group, which constitutes an essential element of the active site of the mature decarboxylase.

The protein localises to the cell membrane. It carries out the reaction a 1,2-diacyl-sn-glycero-3-phospho-L-serine + H(+) = a 1,2-diacyl-sn-glycero-3-phosphoethanolamine + CO2. The protein operates within phospholipid metabolism; phosphatidylethanolamine biosynthesis; phosphatidylethanolamine from CDP-diacylglycerol: step 2/2. Catalyzes the formation of phosphatidylethanolamine (PtdEtn) from phosphatidylserine (PtdSer). In Verminephrobacter eiseniae (strain EF01-2), this protein is Phosphatidylserine decarboxylase proenzyme.